We begin with the raw amino-acid sequence, 343 residues long: S-adenosylmethionine:tRNA ribosyltransferase-isomerase (343 aa).

This sequence belongs to the QueA family. In terms of assembly, monomer.

It localises to the cytoplasm. The catalysed reaction is 7-aminomethyl-7-carbaguanosine(34) in tRNA + S-adenosyl-L-methionine = epoxyqueuosine(34) in tRNA + adenine + L-methionine + 2 H(+). Its pathway is tRNA modification; tRNA-queuosine biosynthesis. Its function is as follows. Transfers and isomerizes the ribose moiety from AdoMet to the 7-aminomethyl group of 7-deazaguanine (preQ1-tRNA) to give epoxyqueuosine (oQ-tRNA). This chain is S-adenosylmethionine:tRNA ribosyltransferase-isomerase, found in Syntrophotalea carbinolica (strain DSM 2380 / NBRC 103641 / GraBd1) (Pelobacter carbinolicus).